The primary structure comprises 395 residues: 1-deoxy-D-xylulose 5-phosphate reductoisomerase (395 aa).

The NADPH site is built by T10, G11, S12, I13, and N123. K124 is a 1-deoxy-D-xylulose 5-phosphate binding site. E125 serves as a coordination point for NADPH. D149 contributes to the Mn(2+) binding site. S150, E151, S185, and H208 together coordinate 1-deoxy-D-xylulose 5-phosphate. E151 is a binding site for Mn(2+). Residue G214 coordinates NADPH. 1-deoxy-D-xylulose 5-phosphate is bound by residues S221, N226, K227, and E230. Mn(2+) is bound at residue E230.

It belongs to the DXR family. It depends on Mg(2+) as a cofactor. The cofactor is Mn(2+).

It catalyses the reaction 2-C-methyl-D-erythritol 4-phosphate + NADP(+) = 1-deoxy-D-xylulose 5-phosphate + NADPH + H(+). It participates in isoprenoid biosynthesis; isopentenyl diphosphate biosynthesis via DXP pathway; isopentenyl diphosphate from 1-deoxy-D-xylulose 5-phosphate: step 1/6. Catalyzes the NADPH-dependent rearrangement and reduction of 1-deoxy-D-xylulose-5-phosphate (DXP) to 2-C-methyl-D-erythritol 4-phosphate (MEP). In Shewanella sediminis (strain HAW-EB3), this protein is 1-deoxy-D-xylulose 5-phosphate reductoisomerase.